Here is a 351-residue protein sequence, read N- to C-terminus: N-terminal EF-hand calcium-binding protein 1 (351 aa).

Residue S4 is modified to Phosphoserine. 2 consecutive EF-hand domains span residues 26 to 61 (KGMS…GVLS) and 60 to 95 (LSGE…HLGE). Residues D39, N41, D43, K45, and E50 each coordinate Ca(2+). Positions 135 to 163 (LLKETLNQLQSLQNSLECAMETTEEQTRQ) form a coiled coil. The tract at residues 180 to 203 (GKRSSRRVQRHNSFSPNSPQFNVS) is disordered. Residues 190 to 202 (HNSFSPNSPQFNV) show a composition bias toward polar residues. Residues S192 and S197 each carry the phosphoserine modification. Residues 209-275 (EEDNQWMTQI…EEFQLALKHY (67 aa)) are a coiled coil. Positions 252–340 (MLVQRQMSVI…LETPELTSTM (89 aa)) constitute an ABM domain.

As to quaternary structure, interacts with STX1. May interact with CPNE6. Expressed in brain (at protein level).

The protein localises to the cytoplasm. The chain is N-terminal EF-hand calcium-binding protein 1 (NECAB1) from Homo sapiens (Human).